We begin with the raw amino-acid sequence, 377 residues long: Secreted LysM effector Lys2 (377 aa).

The N-terminal stretch at 1–22 (MVRQSIGLIALQLLNLVSVAQA) is a signal peptide. Residues 104–119 (TSSSTATTTSQKPTAT) show a composition bias toward low complexity. A disordered region spans residues 104–124 (TSSSTATTTSQKPTATVSPLP). LysM domains lie at 135–182 (KYYN…YVCV) and 207–253 (KYYK…YYCV).

The protein belongs to the secreted LysM effector family.

Functionally, might have a role in sequestration of chitin oligosaccharides (breakdown products of fungal cell walls that are released during invasion and act as triggers of host immunity) to dampen host defense. The polypeptide is Secreted LysM effector Lys2 (Pochonia chlamydosporia (strain 123) (Metacordyceps chlamydosporia)).